The chain runs to 151 residues: Monooxygenase nsrQ (151 aa).

Belongs to the avfA family.

It participates in secondary metabolite biosynthesis. Its function is as follows. Monooxygenase; part of the gene cluster that mediates the biosynthesis of the tetrahydroxanthone dimer neosartorin, which exhibits antibacterial activity. The two different monomeric units appear to be synthesized by the same set of enzymes, among which the Baeyer-Villiger monooxygenase nsrF is the key enzyme for the divergence of the biosynthetic routes. The pathway begins with the synthesis of atrochrysone thioester by the polyketide synthase nsrB. The atrochrysone carboxyl ACP thioesterase nsrC then breaks the thioester bond and releases the atrochrysone carboxylic acid from AacuL. Atrochrysone carboxylic acid is decarboxylated by the decarboxylase nsrE, and oxidized by the anthrone oxygenase nsrD to yield emodin. Emodin is then reduced to emodin hydroquinone by the oxidoreductase nsrR. A-ring reduction by the short chain dehydrogenase nsrJ, dehydration by the scytalone dehydratase-like protein nsrI and probable spontaneous re-oxidation, results in overall deoxygenation to chrysophanol. The Baeyer-Villiger monooxygenase nsrF accepts chrysophanol as a substrate to insert one oxygen atom at two different positions to yield the precursors of both monomric units. NsrF is promiscuous/flexible in interacting with the 2 (non methylated and methylated) aromatic rings of chrysophanol, thus diverging the biosynthetic pathway at this point. After the hydrolysis of the lactones, methylesterification by the methyltransferase nsrG yields respectively moniliphenone and 2,2',6'-trihydroxy-4-methyl-6-methoxya-cyldiphenylmethanone. The next steps are the hydroxylation by the FAD-dependent monooxygenase nsrK, followed by isomerization by the monooxygenase nsrQ. The short chain dehydrogenase/reductase nsrO then catalyzes the C-5 ketoreduction to give the xanthone skeleton of blennolide C and 5-acetylblennolide A. The acetyltransferase nsrL has a strict substrate specificity and uses only blennolide A but not blennolide C to yield 5-acetylblennolide A as the single-acetylated product. In the final step of the biosynthesis, the heterodimerization of the 2 xanthones, blennolide C and 5-acetylblennolide A, is catalyzed by the cytochrome P450 monooxygenase nsrP. NsrP can utilize at least three different xanthones as its substrates to perform the dimerization reaction. This is Monooxygenase nsrQ from Aspergillus novofumigatus (strain IBT 16806).